The following is a 345-amino-acid chain: Molybdate/tungstate-binding protein WtpA (345 aa).

An N-terminal signal peptide occupies residues 1 to 27; that stretch reads MREGGVMKKRLLALIVAFAVLTAGCLG. Residues 41–42, Ser-75, 160–162, Glu-218, and Tyr-236 each bind molybdate; these read GS and DPC. Tungstate-binding positions include 41-42, Ser-75, 160-162, Glu-218, and Tyr-236; these read GS and DPC.

This sequence belongs to the bacterial solute-binding protein 1 family. WtpA subfamily. Monomer. The complex is composed of two ATP-binding proteins (WtpC), two transmembrane proteins (WtpB) and a solute-binding protein (WtpA).

The protein resides in the cell membrane. Functionally, part of the ABC transporter complex WtpABC involved in molybdate/tungstate import. Binds tungstate and molybdate, with a preference for tungstate. In Pyrococcus furiosus (strain ATCC 43587 / DSM 3638 / JCM 8422 / Vc1), this protein is Molybdate/tungstate-binding protein WtpA.